The following is an 89-amino-acid chain: Large ribosomal subunit protein bL31B (89 aa).

Belongs to the bacterial ribosomal protein bL31 family. Type B subfamily. In terms of assembly, part of the 50S ribosomal subunit.

In Aeromonas salmonicida (strain A449), this protein is Large ribosomal subunit protein bL31B.